We begin with the raw amino-acid sequence, 405 residues long: MTRLATLITLAGLLAVSPGAYAQRNRNDTGGSTGAEGLNSLAVKAGLLYFGTASDTRNFADEPYMSVVNNTNEFGMIVPENSMKWEATEKEPGRFSFANADRVRALTKANGQMLRCHALTWHSQLPNFVKTTAWTRDTLTAAIESHISNEVGHFAGDCYAWDVVNEAVNENGSFRDSPFHRTLGTDFLAISFRAAAAADPNAKLYYNDFNIETPGPKANAAMGIVRLLKEQGVRIDGVGFQGHLTVGSTPSRAQLASQLQRFADLGVEVTYTELDIRHKSLPVSSRAAQDQARDYVSVIGSCLDVTACVGVMVWQPTDKYSWIPETFPGTGDACLFDANMNPKPAYTSVSSLLAAAAATAPASVVPPASVTTSKTPIQAGAGRETVSIAGLTLALSSLAFGMFML.

The signal sequence occupies residues 1-22 (MTRLATLITLAGLLAVSPGAYA). 2 N-linked (GlcNAc...) asparagine glycosylation sites follow: asparagine 27 and asparagine 69. In terms of domain architecture, GH10 spans 32–352 (STGAEGLNSL…KPAYTSVSSL (321 aa)). The active-site Proton donor is glutamate 166. An N-linked (GlcNAc...) asparagine glycan is attached at asparagine 171. Residue glutamate 273 is the Nucleophile of the active site. Cysteines 302 and 308 form a disulfide. A lipid anchor (GPI-anchor amidated glycine) is attached at glycine 380. Residues 381 to 405 (AGRETVSIAGLTLALSSLAFGMFML) constitute a propeptide, removed in mature form.

It belongs to the glycosyl hydrolase 10 (cellulase F) family.

It is found in the cell membrane. The protein resides in the secreted. It carries out the reaction Endohydrolysis of (1-&gt;4)-beta-D-xylosidic linkages in xylans.. It participates in glycan degradation; xylan degradation. Endo-1,4-beta-xylanase involved in the hydrolysis of xylan, a major structural heterogeneous polysaccharide found in plant biomass representing the second most abundant polysaccharide in the biosphere, after cellulose. This is Endo-1,4-beta-xylanase 5 (XYL5) from Pyricularia grisea (Crabgrass-specific blast fungus).